Reading from the N-terminus, the 664-residue chain is GSFASVSQRAEPTAASAAAIAELANLDLDDFERYYTLTLLEKFNQKAEKIANPTRQFSQDGNVFAGLSPWSSPVDFGTCMHTLIGYGVRFRTPADALYLNDELAFNLYAAIVELYYNLPFPAPVNQAPWGAQADWYHFSITMPECVQNTCIALRGFYDLSDIARAIIDAYLPAPTFSLGWQRTAGNAMRMCLPYCYGQLLHGLSAAEIGAQPEVRYVLGLIAFPRVATGNGIHMDFAYFDHTDVRATAYLINSYFTFSYYNFLFGSHVVNMDNLYRCISLVGSARGTAHPALLSRNGSQFSNVLGHFIAYADGVVSADFSKILTIRTPRYFGSVVGQAPNVAYYEADPTNNTHAALWAMTRKIWPADGAVFNYRAQTVGFESGVILASNLNEPVVVPTTTTSTSSFLPSLAHTAAATTQSAGAMCMRVRLEELNLEFYSYTLYHAGGMFHLYDNVKALAPVSFNPRCVVLVHDTVQNSSVPAWSVASNLKTYNGTTAKHHNITNASSLANFSIRTLPAVGVQTLEQIMSADAVNAGLGVSCFSLLVASEAATDTTSVIKMDVNTFRDLDAKQRDSAGGELSHRRAQRRQLSPTDDQRRHQPLGRPPHSILRQDPFGPLLPFAHRAQSQVGLHYARRRRVRLRQLRVQSVSIQLLMMMTTQGCGR.

Residues 573-582 (RDSAGGELSH) show a composition bias toward basic and acidic residues. Residues 573-611 (RDSAGGELSHRRAQRRQLSPTDDQRRHQPLGRPPHSILR) are disordered.

This sequence belongs to the baculoviridae E66 family.

Its subcellular location is the virion membrane. Component of the polyhedra envelope. This chain is Occlusion-derived virus envelope protein E66, found in Lymantria dispar multicapsid nuclear polyhedrosis virus (LdMNPV).